Reading from the N-terminus, the 262-residue chain is Octanoyltransferase (262 aa).

A BPL/LPL catalytic domain is found at 41–232 (PQLPDGLLLL…SFCQVFGLQA (192 aa)). Substrate is bound by residues 96 to 103 (RGGEVTYH), 163 to 165 (AIG), and 176 to 178 (GFA). C194 functions as the Acyl-thioester intermediate in the catalytic mechanism.

Belongs to the LipB family.

The protein resides in the cytoplasm. The enzyme catalyses octanoyl-[ACP] + L-lysyl-[protein] = N(6)-octanoyl-L-lysyl-[protein] + holo-[ACP] + H(+). It functions in the pathway protein modification; protein lipoylation via endogenous pathway; protein N(6)-(lipoyl)lysine from octanoyl-[acyl-carrier-protein]: step 1/2. Catalyzes the transfer of endogenously produced octanoic acid from octanoyl-acyl-carrier-protein onto the lipoyl domains of lipoate-dependent enzymes. Lipoyl-ACP can also act as a substrate although octanoyl-ACP is likely to be the physiological substrate. The protein is Octanoyltransferase of Synechococcus sp. (strain JA-2-3B'a(2-13)) (Cyanobacteria bacterium Yellowstone B-Prime).